We begin with the raw amino-acid sequence, 323 residues long: Probable inactive poly [ADP-ribose] polymerase SRO2 (323 aa).

One can recognise a PARP catalytic domain in the interval 31–257 (SSVSHAGSSF…FASRPSSPWV (227 aa)). The RST domain occupies 250–321 (SRPSSPWVSF…IKNHKNRNKV (72 aa)).

As to quaternary structure, interacts with STO.

It localises to the nucleus. Functionally, probable inactive ADP-ribosyltransferase that may be involved in stress and developmental responses. The chain is Probable inactive poly [ADP-ribose] polymerase SRO2 (SRO2) from Arabidopsis thaliana (Mouse-ear cress).